The primary structure comprises 541 residues: MAGAIIENMSTKKLCIVGGILLVFQIVAFLVGGLIAPAPTTAVSYVAAKCVDVRKNHHKTRWLMPWGPNKCNKINDFEEAIPREIEANDIVFSVHIPLPSMEMSPWFQFMLFILQIDIAFKLNNQIRENAEVSMDVSLGYRDDMFSEWTEMAHERVPRKLRCTFTSPKTPEHEGRHYECDVLPFMEIGSVAHKYYLLNIRLPVNEKKKINVGIGEIKDIRLVGIHQNGGFTKVWFAMKTFLTPSIFIIMVWYWRRITMMSRPPVLLEKVIFALGISMTFINIPVEWFSIGFDWTWMLLFGDIRQGIFYAMLLSFWIIFCGEHMMDQHERNHIAGYWKQVGPIAVGSFCLFIFDMCERGVQLTNPFYSIWTTDVGTELAMAFIIVAGICLCLYFLFLCFMVFQVFRNISGKQSSLPAMSKVRRLHYEGLIFRFKFLMLITLACAAMTVIFFIVSQVTEGHWKWGGVTVQVSSAFFTGIYGMWNLYVFALMFLYAPSHKNYGEDQSNGDLGVHSGEELQLTTTITHVDGPTEIYKLTRKEAQE.

Over 1 to 15 (MAGAIIENMSTKKLC) the chain is Cytoplasmic. A helical transmembrane segment spans residues 16-36 (IVGGILLVFQIVAFLVGGLIA). Residues 37 to 232 (PAPTTAVSYV…GIHQNGGFTK (196 aa)) lie on the Lumenal side of the membrane. Residues 101 to 202 (MEMSPWFQFM…KYYLLNIRLP (102 aa)) form an interaction with Wnt proteins region. Residues 233-253 (VWFAMKTFLTPSIFIIMVWYW) form a helical membrane-spanning segment. The Cytoplasmic portion of the chain corresponds to 254 to 268 (RRITMMSRPPVLLEK). A helical transmembrane segment spans residues 269 to 289 (VIFALGISMTFINIPVEWFSI). Topologically, residues 290 to 303 (GFDWTWMLLFGDIR) are lumenal. Residues 304–324 (QGIFYAMLLSFWIIFCGEHMM) traverse the membrane as a helical segment. Over 325 to 331 (DQHERNH) the chain is Cytoplasmic. The helical transmembrane segment at 332–352 (IAGYWKQVGPIAVGSFCLFIF) threads the bilayer. Topologically, residues 353–380 (DMCERGVQLTNPFYSIWTTDVGTELAMA) are lumenal. Residues 381–401 (FIIVAGICLCLYFLFLCFMVF) form a helical membrane-spanning segment. At 402–431 (QVFRNISGKQSSLPAMSKVRRLHYEGLIFR) the chain is on the cytoplasmic side. The helical transmembrane segment at 432–452 (FKFLMLITLACAAMTVIFFIV) threads the bilayer. Topologically, residues 453–471 (SQVTEGHWKWGGVTVQVSS) are lumenal. The chain crosses the membrane as a helical span at residues 472–492 (AFFTGIYGMWNLYVFALMFLY). At 493–541 (APSHKNYGEDQSNGDLGVHSGEELQLTTTITHVDGPTEIYKLTRKEAQE) the chain is on the cytoplasmic side.

This sequence belongs to the wntless family. As to quaternary structure, interacts with WNT3A. Interacts with WNT1, WNT3 and WNT5A. N-glycosylated. Expressed in the brain, skeletal muscle, heart muscle, lung, gut, liver, and kidney (at protein level). In the brain, expressed in the cortex, striatum, ventral tegmentum, nucleus accumbens and to a lesser extent in the Purkinjie cells in the cerebellum. Expressed in eye iridocorneal angle.

It is found in the golgi apparatus membrane. Its subcellular location is the cytoplasmic vesicle membrane. It localises to the cell membrane. The protein localises to the endoplasmic reticulum membrane. The protein resides in the early endosome membrane. Regulates Wnt proteins sorting and secretion in a feedback regulatory mechanism. This reciprocal interaction plays a key role in the regulation of expression, subcellular location, binding and organelle-specific association of Wnt proteins. Also plays an important role in establishment of the anterior-posterior body axis formation during development. The chain is Protein wntless homolog (Wls) from Rattus norvegicus (Rat).